The chain runs to 361 residues: MSHKERPTFYRQELNKTIWEVPERYQNLSPVGSGAYGSVCSALDTKSGLRVAVKKLSRPFQSMIHAKRTYRELRLLKHMKHENVIGLLDAFSPATCLAGFNDVYLVTHLMGADLNNIVKCQKLTDDHVQFLIYQILRGLKYIHSADIIHRDLKPSNLAVNEDCELKILDFGLARLTDDEMTGYVATRWYRAPEIMLNWMHYNMTVDIWSVGCIMAELLTGRTLFPGTDHINQLQQIMRLTGTPPASLISRMPSHEARNYINSLSYMPKRNFADVFVGANPMAVDLLEKMLVLDTDKRITASQALAHPYFAQYHDPDDEPEADPYDQSFESRDLDIEEWKRLTYEEVISFEPPVFDGDEMES.

Residues 25 to 309 (YQNLSPVGSG…ASQALAHPYF (285 aa)) enclose the Protein kinase domain. ATP contacts are provided by residues 31–39 (VGSGAYGSV) and lysine 54. Aspartate 151 serves as the catalytic Proton acceptor. Threonine 181 carries the post-translational modification Phosphothreonine; by MAP2K6. Positions 181-183 (TGY) match the TXY motif. Position 183 is a phosphotyrosine; by MAP2K6 (tyrosine 183).

The protein belongs to the protein kinase superfamily. CMGC Ser/Thr protein kinase family. MAP kinase subfamily. It depends on Mg(2+) as a cofactor. Post-translationally, dually phosphorylated on Thr-181 and Tyr-183, which activates the enzyme. Predominantly expressed in the ovary. Lower levels present in brain, gill, heart, spleen, kidney, muscle and gut.

The protein resides in the cytoplasm. It localises to the nucleus. It catalyses the reaction L-seryl-[protein] + ATP = O-phospho-L-seryl-[protein] + ADP + H(+). It carries out the reaction L-threonyl-[protein] + ATP = O-phospho-L-threonyl-[protein] + ADP + H(+). With respect to regulation, activated by threonine and tyrosine phosphorylation by the dual specificity kinase, MKK6. Serine/threonine kinase which acts as an essential component of the MAP kinase signal transduction pathway. Mapk14b is one of the four p38 MAPKs which play an important role in the cascades of cellular responses evoked by extracellular stimuli such as pro-inflammatory cytokines or physical stress leading to direct activation of transcription factors. Accordingly, p38 MAPKs phosphorylate a broad range of proteins and it has been estimated that they may have approximately 200 to 300 substrates each. Some of the targets are downstream kinases which are activated through phosphorylation and further phosphorylate additional targets. In Cyprinus carpio (Common carp), this protein is Mitogen-activated protein kinase 14B (mapk14b).